Here is an 82-residue protein sequence, read N- to C-terminus: Putative membrane protein insertion efficiency factor (82 aa).

This sequence belongs to the UPF0161 family.

It is found in the cell inner membrane. Could be involved in insertion of integral membrane proteins into the membrane. The sequence is that of Putative membrane protein insertion efficiency factor from Francisella tularensis subsp. holarctica (strain LVS).